The primary structure comprises 150 residues: Transcriptional repressor NrdR (150 aa).

The segment at 3–34 (CPYCQFEDTRVIDSRLASEGEQVRRRRECNRC) is a zinc-finger region. An ATP-cone domain is found at 49 to 139 (PRIVKRDGTR…VYRSFEDVSA (91 aa)).

The protein belongs to the NrdR family. It depends on Zn(2+) as a cofactor.

In terms of biological role, negatively regulates transcription of bacterial ribonucleotide reductase nrd genes and operons by binding to NrdR-boxes. The polypeptide is Transcriptional repressor NrdR (Alkalilimnicola ehrlichii (strain ATCC BAA-1101 / DSM 17681 / MLHE-1)).